The sequence spans 165 residues: UPF0303 protein BMA1246 (165 aa).

This sequence belongs to the UPF0303 family.

This chain is UPF0303 protein BMA1246, found in Burkholderia mallei (strain ATCC 23344).